Reading from the N-terminus, the 235-residue chain is Lipoprotein-releasing system ATP-binding protein LolD (235 aa).

The ABC transporter domain maps to 13–235 (LCCSNIIKRY…SNGMLKISTI (223 aa)). ATP is bound at residue 49–56 (GASGSGKS).

The protein belongs to the ABC transporter superfamily. Lipoprotein translocase (TC 3.A.1.125) family. In terms of assembly, the complex is composed of two ATP-binding proteins (LolD) and two transmembrane proteins (LolC and LolE).

It localises to the cell inner membrane. In terms of biological role, part of the ABC transporter complex LolCDE involved in the translocation of mature outer membrane-directed lipoproteins, from the inner membrane to the periplasmic chaperone, LolA. Responsible for the formation of the LolA-lipoprotein complex in an ATP-dependent manner. This chain is Lipoprotein-releasing system ATP-binding protein LolD, found in Blochmanniella floridana.